We begin with the raw amino-acid sequence, 143 residues long: Putative transmembrane protein ORF32 (143 aa).

2 helical membrane-spanning segments follow: residues 20–42 (GISG…SFTL) and 52–74 (WPLI…EGGV).

The protein resides in the host membrane. In Haloarcula hispanica (His1V), this protein is Putative transmembrane protein ORF32.